Here is a 410-residue protein sequence, read N- to C-terminus: Protein TIC 214 (410 aa).

A run of 6 helical transmembrane segments spans residues F22–I42, G61–I81, L87–L107, A131–I151, L161–I181, and L210–L230.

The protein belongs to the TIC214 family. In terms of assembly, part of the Tic complex.

The protein resides in the plastid. It is found in the chloroplast inner membrane. In terms of biological role, involved in protein precursor import into chloroplasts. May be part of an intermediate translocation complex acting as a protein-conducting channel at the inner envelope. The polypeptide is Protein TIC 214 (Mesostigma viride (Green alga)).